Here is a 179-residue protein sequence, read N- to C-terminus: Large ribosomal subunit protein uL5 (179 aa).

The protein belongs to the universal ribosomal protein uL5 family. As to quaternary structure, part of the 50S ribosomal subunit; part of the 5S rRNA/L5/L18/L25 subcomplex. Contacts the 5S rRNA and the P site tRNA. Forms a bridge to the 30S subunit in the 70S ribosome.

In terms of biological role, this is one of the proteins that bind and probably mediate the attachment of the 5S RNA into the large ribosomal subunit, where it forms part of the central protuberance. In the 70S ribosome it contacts protein S13 of the 30S subunit (bridge B1b), connecting the 2 subunits; this bridge is implicated in subunit movement. Contacts the P site tRNA; the 5S rRNA and some of its associated proteins might help stabilize positioning of ribosome-bound tRNAs. This chain is Large ribosomal subunit protein uL5, found in Xylella fastidiosa (strain 9a5c).